The chain runs to 190 residues: Putative phosphatidylethanolamine-binding protein (190 aa).

Belongs to the phosphatidylethanolamine-binding protein family.

The chain is Putative phosphatidylethanolamine-binding protein from Plasmodium falciparum.